A 192-amino-acid chain; its full sequence is Probable GTP-binding protein EngB (192 aa).

Residues 22 to 192 (SLPEIVFVGR…LLEQLENYTG (171 aa)) enclose the EngB-type G domain. GTP is bound by residues 30-37 (GRSNVGKS), 57-61 (GKTQL), 75-78 (DLPG), 142-145 (TKYD), and 172-174 (YSA). Mg(2+)-binding residues include Ser37 and Thr59.

It belongs to the TRAFAC class TrmE-Era-EngA-EngB-Septin-like GTPase superfamily. EngB GTPase family. Mg(2+) serves as cofactor.

Necessary for normal cell division and for the maintenance of normal septation. The chain is Probable GTP-binding protein EngB from Prosthecochloris aestuarii (strain DSM 271 / SK 413).